A 242-amino-acid chain; its full sequence is Adapter protein MecA (242 aa).

The protein belongs to the MecA family. Homodimer.

In terms of biological role, enables the recognition and targeting of unfolded and aggregated proteins to the ClpC protease or to other proteins involved in proteolysis. This Streptococcus gordonii (strain Challis / ATCC 35105 / BCRC 15272 / CH1 / DL1 / V288) protein is Adapter protein MecA.